The sequence spans 1141 residues: cGMP-inhibited 3',5'-cyclic phosphodiesterase 3A (1141 aa).

A disordered region spans residues 1–41 (MAVRGEAAQDWAKPGLRGPSPAPVARGDHRCRGGSPSSPRG). A helical transmembrane segment spans residues 62–82 (SALCAGSLSVLLALLVRLVGG). The interval 89 to 111 (ESSQEAAAEEEEEEGARGGVFPG) is disordered. 5 consecutive transmembrane segments (helical) span residues 127–147 (LQPAALLFSLLCAFFWMGLCL), 157–177 (AVALLAACCAGEALVQLSLGV), 182–202 (LLSLPAAGVLLSCLGGATWLV), 207–227 (LGVLMVALTSALRTVALVSLE), and 229–249 (FKVAWRPYLAYLAAVLGLLLA). The interval 262–309 (PAPPRERFGSQSSARTKEEIPGWKRRRRSSSVVAGEMSGCGGKSHRRT) is disordered. Position 310 is a phosphoserine (serine 310). Residues 433 to 445 (RVSSTWTTTTSAT) show a composition bias toward low complexity. Positions 433–479 (RVSSTWTTTTSATGLPTLEPAPVRRDRSASIKPHEAPSPSAVNPDSW) are disordered. The span at 454-467 (PVRRDRSASIKPHE) shows a compositional bias: basic and acidic residues. Serine 492, serine 520, serine 524, and serine 533 each carry phosphoserine. Residues 504–643 (HVKAKKQNRP…SDILQNDEEA (140 aa)) form a disordered region. Pro residues predominate over residues 522 to 532 (VPSPSSSPPQG). The segment covering 618-637 (TSQVTSDYETNNNSDSSDIL) has biased composition (polar residues). An interaction with SLFN12 region spans residues 669 to 1141 (KPILAPEPLV…EETLAPQPDL (473 aa)). The PDEase domain occupies 674-1093 (PEPLVMDNLD…MMWKKVIEEE (420 aa)). The active-site Proton donor is histidine 752. Residue histidine 752 participates in AMP binding. Mn(2+)-binding residues include histidine 756, histidine 836, aspartate 837, and aspartate 950. AMP contacts are provided by aspartate 837, aspartate 950, and glutamine 1001. Residue aspartate 837 coordinates Mg(2+). Disordered stretches follow at residues 1024-1062 (GKWVDDSDDSGDTDDPEEEEEEAETPHEEETCENSEAPR) and 1098-1141 (GTEN…QPDL). The span at 1029 to 1046 (DSDDSGDTDDPEEEEEEA) shows a compositional bias: acidic residues. Serine 1033 bears the Phosphoserine mark. Phosphothreonine is present on threonine 1036. Polar residues predominate over residues 1098–1113 (GTENQAPDQAPLQHSS). A Glycyl lysine isopeptide (Lys-Gly) (interchain with G-Cter in SUMO2) cross-link involves residue lysine 1120.

This sequence belongs to the cyclic nucleotide phosphodiesterase family. PDE3 subfamily. Homodimer. Interacts with PDE3A; direct low affinity interaction which is stimulated by binding of 17beta-estradiol/E2 to PDE3A and that positively regulates the ribonuclease activity of SLFN12. Mn(2+) serves as cofactor. Mg(2+) is required as a cofactor.

It localises to the membrane. The protein resides in the cytoplasm. The protein localises to the cytosol. The catalysed reaction is a nucleoside 3',5'-cyclic phosphate + H2O = a nucleoside 5'-phosphate + H(+). It catalyses the reaction 3',5'-cyclic AMP + H2O = AMP + H(+). The enzyme catalyses 3',5'-cyclic GMP + H2O = GMP + H(+). It carries out the reaction 3',5'-cyclic UMP + H2O = UMP + H(+). Its function is as follows. Cyclic nucleotide phosphodiesterase with specificity for the second messengers cAMP and cGMP, which are key regulators of many important physiological processes. Also has activity toward cUMP. Independently of its catalytic activity it is part of an E2/17beta-estradiol-induced pro-apoptotic signaling pathway. E2 stabilizes the PDE3A/SLFN12 complex in the cytosol, promoting the dephosphorylation of SLFN12 and activating its pro-apoptotic ribosomal RNA/rRNA ribonuclease activity. This apoptotic pathway might be relevant in tissues with high concentration of E2 and be for instance involved in placenta remodeling. The sequence is that of cGMP-inhibited 3',5'-cyclic phosphodiesterase 3A from Rattus norvegicus (Rat).